The sequence spans 178 residues: Methylmalonyl-CoA epimerase, mitochondrial (178 aa).

Residues 1–38 (MRRVVKAAALAAGATGLFSRVQTSVAIGRSFSTPQSQF) constitute a mitochondrion transit peptide. The VOC domain maps to 49 to 178 (RLNHVAVAVP…GGVLVELEQA (130 aa)). His-52 contributes to the Co(2+) binding site. Lys-116 is subject to N6-succinyllysine. Co(2+) is bound at residue His-124. Lys-152 carries the post-translational modification N6-acetyllysine; alternate. Residue Lys-152 is modified to N6-succinyllysine; alternate. Residue Glu-174 participates in Co(2+) binding.

This sequence belongs to the methylmalonyl-CoA epimerase family.

Its subcellular location is the mitochondrion. The enzyme catalyses (R)-methylmalonyl-CoA = (S)-methylmalonyl-CoA. Its function is as follows. Methylmalonyl-CoA epimerase involved in propionyl-CoA metabolism. The polypeptide is Methylmalonyl-CoA epimerase, mitochondrial (Mus musculus (Mouse)).